A 30-amino-acid polypeptide reads, in one-letter code: Trypsin inhibitor 1 (30 aa).

3 disulfide bridges follow: cysteine 4-cysteine 21, cysteine 11-cysteine 23, and cysteine 17-cysteine 29.

The protein belongs to the protease inhibitor I7 (squash-type serine protease inhibitor) family.

The protein resides in the secreted. Inhibits trypsin. The polypeptide is Trypsin inhibitor 1 (Momordica charantia (Bitter gourd)).